The primary structure comprises 678 residues: Putative cyclic nucleotide-gated ion channel 15 (678 aa).

Over 1–81 (MGYGNSRSVR…RGQTIRRWNK (81 aa)) the chain is Cytoplasmic. A helical transmembrane segment spans residues 82-102 (IFLIACLVSLFVDPLFFFLPV). The Extracellular portion of the chain corresponds to 103-115 (MRNEACITIGVRL). The helical transmembrane segment at 116–136 (EVVLTLIRSLADAFYIAQILI) threads the bilayer. Residues 137 to 170 (RFRTAYIAPPSRVFGRGELVIDSRKIAWRYLHKS) are Cytoplasmic-facing. The chain crosses the membrane as a helical span at residues 171-191 (FWIHLVAALPLPQVLIWIIIP). The Extracellular segment spans residues 192–203 (NLRGSPMTNTKN). The helical transmembrane segment at 204–224 (VLRFIIIFQYVPRMFLIFPLS) threads the bilayer. Residues 225–245 (RQIIKATGVVTETAWAGAAYN) lie on the Cytoplasmic side of the membrane. A helical transmembrane segment spans residues 246-266 (LMLYMLASHVLGACWYLLAVE). Over 267–364 (RQEACWRHAC…GQNLATSTYA (98 aa)) the chain is Extracellular. Residues 365–385 (GEILFAIIIATLGLVLFALLI) traverse the membrane as a helical segment. Residues 386–678 (GNMQTYLQST…KPVEPDFSSE (293 aa)) are Cytoplasmic-facing. A nucleoside 3',5'-cyclic phosphate is bound by residues 471 to 595 (LFDQ…TKQL) and E542. The calmodulin-binding stretch occupies residues 587–602 (FRRLHTKQLRHKFRFY). Residues 607–638 (RTWAACFIQAAWRRHRKRKYKTELRAKEEFHY) form the IQ domain. Over residues 656–668 (RSGSDSGMMSSIQ) the composition is skewed to polar residues. The tract at residues 656–678 (RSGSDSGMMSSIQKPVEPDFSSE) is disordered.

It belongs to the cyclic nucleotide-gated cation channel (TC 1.A.1.5) family. In terms of assembly, homotetramer or heterotetramer.

Its subcellular location is the cell membrane. Its function is as follows. Putative cyclic nucleotide-gated ion channel. This Arabidopsis thaliana (Mouse-ear cress) protein is Putative cyclic nucleotide-gated ion channel 15 (CNGC15).